A 356-amino-acid chain; its full sequence is Neurogenic differentiation factor 1 (356 aa).

Positions 1 to 94 (MTKSYSESGL…GPKKKKMTKA (94 aa)) are disordered. Over residues 58–78 (EEEDEDEDLEEEEEEEEEDDD) the composition is skewed to acidic residues. Residues 81–93 (PKRRGPKKKKMTK) are compositionally biased toward basic residues. The Nuclear localization signal signature appears at 87–93 (KKKKMTK). The region spanning 101-153 (LRRMKANARERNRMHGLNAALDNLRKVVPCYSKTQKLSKIETLRLAKNYIWAL) is the bHLH domain. A phosphoserine mark is found at Ser162, Ser259, Ser266, and Ser274. At Ser335 the chain carries Phosphoserine; by CaMK2.

Efficient DNA-binding requires dimerization with another bHLH protein. Heterodimer with TCF3/E47; the heterodimer is inhibited in presence of ID2, but not NR0B2, to E-box element. Interacts with EP300; the interaction is inhibited by NR0B2. Interacts with RREB1. Interacts with ATOH8. In terms of processing, phosphorylated. In islet cells, phosphorylated on Ser-274 upon glucose stimulation; which may be required for nuclear localization. In activated neurons, phosphorylated on Ser-335; which promotes dendritic growth. Phosphorylated by MAPK1; phosphorylation regulates heterodimerization and DNA-binding activities. Phosphorylation on Ser-266 and Ser-274 increases transactivation on the insulin promoter in glucose-stimulated insulinoma cells.

The protein resides in the cytoplasm. It localises to the nucleus. Acts as a transcriptional activator: mediates transcriptional activation by binding to E box-containing promoter consensus core sequences 5'-CANNTG-3'. Associates with the p300/CBP transcription coactivator complex to stimulate transcription of the secretin gene as well as the gene encoding the cyclin-dependent kinase inhibitor CDKN1A. Contributes to the regulation of several cell differentiation pathways, like those that promote the formation of early retinal ganglion cells, inner ear sensory neurons, granule cells forming either the cerebellum or the dentate gyrus cell layer of the hippocampus, endocrine islet cells of the pancreas and enteroendocrine cells of the small intestine. Together with PAX6 or SIX3, is required for the regulation of amacrine cell fate specification. Also required for dendrite morphogenesis and maintenance in the cerebellar cortex. Associates with chromatin to enhancer regulatory elements in genes encoding key transcriptional regulators of neurogenesis. The polypeptide is Neurogenic differentiation factor 1 (NEUROD1) (Homo sapiens (Human)).